A 272-amino-acid chain; its full sequence is MKANIACVQMAPKVCDVKHNLQKMSSYVHEVMESNPSTNLILFPELITSGYECGNTFTQIAEIAGEGPSFKTMSNLAAKYHVNIIYGFPEKEEKQSNIIYNSCIYITENGNLGGVYRKVHLFDTERKHFKKGSDFPIFETSFGKLGVMICWDTAFPEVARIHALNGADLLVVATNWENPYSDDWDLVTKARAFENCIPLVAANRVGTDEKLSFFGHSKIIGPTGKVIKALDEEKEGVISYTVDLDDAKPLRKNYYTFFEDRMPDLYKRLLSP.

The CN hydrolase domain maps to 3–244 (ANIACVQMAP…EGVISYTVDL (242 aa)). The active-site Proton acceptor is glutamate 45. Lysine 118 serves as the catalytic Proton donor. The active-site Nucleophile is cysteine 150.

The protein belongs to the carbon-nitrogen hydrolase superfamily.

It is found in the cytoplasm. It localises to the nucleus. This Schizosaccharomyces pombe (strain 972 / ATCC 24843) (Fission yeast) protein is Probable nitrilase C965.09.